The sequence spans 969 residues: MFVVGQRWISESENNLGLGIVTASDNRTVTIQFPAAEEERIYALSVAPLTRVQFQKGDRINSVEGWQLDVEEVVENQGFIIYLGKRADSGEEAVLPEMQLDHKVSFSKPQDRLFSAQIDRSDRFALRYRALQHQQAQFQSPLRGMRGIRASLIPHQLHIAKEVGQRVAPRVLLADEVGLGKTIEAGMILQQQLFSGRVERVLVLVPESLQHQWLVEMLRRFNLKFSLFDEERCADFDKADEDGNDVSENPFDSEALVIASIDWLESSPNRAKQVLASNWDMLIVDEAHHLEWSENEPSVGYQFVERLSKQTSAVLLLTATPEQLGQESHFARLALLDADRFYDYNSFVAEQKDYKPVADAVATLLNDKPLSNDEQNSIADLLSEKDTEPMFKVINSEKSKENDRLQVRQELIRELIDRHGTSRVLFRNTRQGVKGFPHRVYHQITLEMPSQYTNALKVMGMMGGVTKDDQLYPERLFQRMNPAAKWADFDPRIEWLITFLKNHRDEKILVICKQADTAIALEQILREREAIRSAVFHEKMSIVERDRASAYFAQMEEGAQVLISSSIGSEGRNFQFASNLVLFNLPDNPDLLEQSIGRLDRIGQKNDIQIHVPCFENSMQMILATWYHQGLNAFEETCPMGAALFREFGEELEIFLKNPQAVGFDEFLAKTFKRQQHLKAELEQGRDRLLELNSNGGEAAQALAEAIAKEDNNPHLVNFALSLFDVIGLEQEDLGEQSIVISPTGHMLVPDFPGIAEDGTTVTFDRQLALMREDVEFLTWDHPMIRNGIDLITSGYIGKSAISLLINKNLPAGTLLLEAIYMVETQAPKGLNLTRFLPPTPVRILLDNKGNDMAAQVSFAGLEKQLKPLNKQMANKIAKMAQADIKKLIGISEQKIAAKLPELIEKASQDADSTLSAELHRLTSLQAVNKNIRSDEIEALEQQRIESLKQIALANWRLDSLRVIVSNKE.

The Helicase ATP-binding domain maps to 162–339 (EVGQRVAPRV…FARLALLDAD (178 aa)). 175 to 182 (DEVGLGKT) contacts ATP. The DEAH box motif lies at 285-288 (DEAH). In terms of domain architecture, Helicase C-terminal spans 492 to 663 (RIEWLITFLK…IFLKNPQAVG (172 aa)).

It belongs to the SNF2/RAD54 helicase family. RapA subfamily. Interacts with the RNAP. Has a higher affinity for the core RNAP than for the holoenzyme. Its ATPase activity is stimulated by binding to RNAP.

Functionally, transcription regulator that activates transcription by stimulating RNA polymerase (RNAP) recycling in case of stress conditions such as supercoiled DNA or high salt concentrations. Probably acts by releasing the RNAP, when it is trapped or immobilized on tightly supercoiled DNA. Does not activate transcription on linear DNA. Probably not involved in DNA repair. This chain is RNA polymerase-associated protein RapA, found in Actinobacillus pleuropneumoniae serotype 3 (strain JL03).